Consider the following 855-residue polypeptide: Envelope glycoprotein gp160 (855 aa).

The signal sequence occupies residues 1–31 (MTARGTRKNYQRLWRWGTMLLGMLMICSAAE). The Extracellular portion of the chain corresponds to 32-683 (NLWVTVYYGV…ITNWLWYIRI (652 aa)). A disulfide bridge connects residues cysteine 53 and cysteine 73. 17 N-linked (GlcNAc...) asparagine; by host glycosylation sites follow: asparagine 87, asparagine 134, asparagine 142, asparagine 145, asparagine 161, asparagine 165, asparagine 192, asparagine 202, asparagine 239, asparagine 246, asparagine 267, asparagine 281, asparagine 294, asparagine 300, asparagine 306, asparagine 336, and asparagine 359. 5 disulfide bridges follow: cysteine 118/cysteine 210, cysteine 125/cysteine 201, cysteine 130/cysteine 162, cysteine 223/cysteine 252, and cysteine 233/cysteine 244. Positions 130–161 (CTDVNTTSSSLRNATNTTSSSWETMEKGELKN) are V1. Residues 162–201 (CSFNTTTSIRDKMQEQYALFYKLDVLPIDKNDTKFRLIHC) are V2. The segment at 301–334 (CTRPNNNTRNRISIGPGRAFHTTKQIIGDIRQAH) is V3. An intrachain disulfide couples cysteine 301 to cysteine 335. Positions 367-377 (SSGGDPEIVMH) are CD4-binding loop. 2 disulfide bridges follow: cysteine 381/cysteine 442 and cysteine 388/cysteine 415. The V4 stretch occupies residues 388–415 (CNTSQLFNSTWNDTTRANSTEVTITLPC). 5 N-linked (GlcNAc...) asparagine; by host glycosylation sites follow: asparagine 389, asparagine 395, asparagine 399, asparagine 405, and asparagine 458. V5 stretches follow at residues 458–469 (NTTNGIEIFRPA) and 460–469 (TNGIEIFRPA). The interval 510-531 (AVGMLGAMFLGFLGAAGSTMGA) is fusion peptide. Residues 573-591 (KQLQARVLAVERYLKDQQL) form an immunosuppression region. Cysteine 597 and cysteine 603 are joined by a disulfide. Residues asparagine 610, asparagine 615, asparagine 624, and asparagine 636 are each glycosylated (N-linked (GlcNAc...) asparagine; by host). Residues 632–666 (REIDNYTHLIYTLIEESQNQQEKNEQELLELDKWA) adopt a coiled-coil conformation. The interval 661–682 (ELDKWAGLWSWFSITNWLWYIR) is MPER; binding to GalCer. The helical transmembrane segment at 684–704 (FIIIVGGLVGLRIVFAVLSIV) threads the bilayer. Residues 705-855 (NRVRQGYSPL…IRQGLERALL (151 aa)) are Cytoplasmic-facing. The short motif at 711–714 (YSPL) is the YXXL motif; contains endocytosis signal element. The disordered stretch occupies residues 718–742 (TRLPTQRGPDRPEGIEEEGGERDRD). Residue cysteine 763 is the site of S-palmitoyl cysteine; by host attachment. Residues 854-855 (LL) carry the Di-leucine internalization motif motif.

The protein belongs to the HIV-1 env protein family. The mature envelope protein (Env) consists of a homotrimer of non-covalently associated gp120-gp41 heterodimers. The resulting complex protrudes from the virus surface as a spike. There seems to be as few as 10 spikes on the average virion. Interacts with host CD4, CCR5 and CXCR4. Gp120 also interacts with the C-type lectins CD209/DC-SIGN and CLEC4M/DC-SIGNR (collectively referred to as DC-SIGN(R)). Gp120 and gp41 interact with GalCer. Gp120 interacts with host ITGA4/ITGB7 complex; on CD4+ T-cells, this interaction results in rapid activation of integrin ITGAL/LFA-1, which facilitates efficient cell-to-cell spreading of HIV-1. Gp120 interacts with cell-associated heparan sulfate; this interaction increases virus infectivity on permissive cells and may be involved in infection of CD4- cells. As to quaternary structure, the mature envelope protein (Env) consists of a homotrimer of non-covalently associated gp120-gp41 heterodimers. The resulting complex protrudes from the virus surface as a spike. There seems to be as few as 10 spikes on the average virion. In terms of processing, highly glycosylated by host. The high number of glycan on the protein is reffered to as 'glycan shield' because it contributes to hide protein sequence from adaptive immune system. Post-translationally, palmitoylation of the transmembrane protein and of Env polyprotein (prior to its proteolytic cleavage) is essential for their association with host cell membrane lipid rafts. Palmitoylation is therefore required for envelope trafficking to classical lipid rafts, but not for viral replication. Specific enzymatic cleavages in vivo yield mature proteins. Envelope glycoproteins are synthesized as an inactive precursor that is heavily N-glycosylated and processed likely by host cell furin in the Golgi to yield the mature SU and TM proteins. The cleavage site between SU and TM requires the minimal sequence [KR]-X-[KR]-R. About 2 of the 9 disulfide bonds of gp41 are reduced by P4HB/PDI, following binding to CD4 receptor.

The protein resides in the virion membrane. It is found in the host cell membrane. The protein localises to the host endosome membrane. Functionally, oligomerizes in the host endoplasmic reticulum into predominantly trimers. In a second time, gp160 transits in the host Golgi, where glycosylation is completed. The precursor is then proteolytically cleaved in the trans-Golgi and thereby activated by cellular furin or furin-like proteases to produce gp120 and gp41. In terms of biological role, attaches the virus to the host lymphoid cell by binding to the primary receptor CD4. This interaction induces a structural rearrangement creating a high affinity binding site for a chemokine coreceptor like CXCR4 and/or CCR5. Acts as a ligand for CD209/DC-SIGN and CLEC4M/DC-SIGNR, which are respectively found on dendritic cells (DCs), and on endothelial cells of liver sinusoids and lymph node sinuses. These interactions allow capture of viral particles at mucosal surfaces by these cells and subsequent transmission to permissive cells. HIV subverts the migration properties of dendritic cells to gain access to CD4+ T-cells in lymph nodes. Virus transmission to permissive T-cells occurs either in trans (without DCs infection, through viral capture and transmission), or in cis (following DCs productive infection, through the usual CD4-gp120 interaction), thereby inducing a robust infection. In trans infection, bound virions remain infectious over days and it is proposed that they are not degraded, but protected in non-lysosomal acidic organelles within the DCs close to the cell membrane thus contributing to the viral infectious potential during DCs' migration from the periphery to the lymphoid tissues. On arrival at lymphoid tissues, intact virions recycle back to DCs' cell surface allowing virus transmission to CD4+ T-cells. Acts as a class I viral fusion protein. Under the current model, the protein has at least 3 conformational states: pre-fusion native state, pre-hairpin intermediate state, and post-fusion hairpin state. During fusion of viral and target intracellular membranes, the coiled coil regions (heptad repeats) assume a trimer-of-hairpins structure, positioning the fusion peptide in close proximity to the C-terminal region of the ectodomain. The formation of this structure appears to drive apposition and subsequent fusion of viral and target cell membranes. Complete fusion occurs in host cell endosomes and is dynamin-dependent, however some lipid transfer might occur at the plasma membrane. The virus undergoes clathrin-dependent internalization long before endosomal fusion, thus minimizing the surface exposure of conserved viral epitopes during fusion and reducing the efficacy of inhibitors targeting these epitopes. Membranes fusion leads to delivery of the nucleocapsid into the cytoplasm. This Homo sapiens (Human) protein is Envelope glycoprotein gp160.